The following is a 336-amino-acid chain: Fructose-1,6-bisphosphatase class 1 (336 aa).

Mg(2+)-binding residues include glutamate 90, aspartate 112, leucine 114, and aspartate 115. Substrate is bound by residues 115–118 (DGSS), asparagine 211, and lysine 277. Glutamate 283 provides a ligand contact to Mg(2+).

Belongs to the FBPase class 1 family. Homotetramer. Mg(2+) serves as cofactor.

It localises to the cytoplasm. The enzyme catalyses beta-D-fructose 1,6-bisphosphate + H2O = beta-D-fructose 6-phosphate + phosphate. Its pathway is carbohydrate biosynthesis; gluconeogenesis. The sequence is that of Fructose-1,6-bisphosphatase class 1 from Stutzerimonas stutzeri (strain A1501) (Pseudomonas stutzeri).